Reading from the N-terminus, the 125-residue chain is RxLR effector protein Avh6 (125 aa).

An N-terminal signal peptide occupies residues 1-25; it reads MRLSSTTFVVLAAVLLASGTAVSKA. Residues 48 to 70 carry the RxLR-dEER motif; sequence RFLRSHHTEDGEAKLSNYDNEER.

Belongs to the RxLR effector family.

Its subcellular location is the secreted. It is found in the host cell. Functionally, effector that suppresses plant defense responses during the early stages of pathogen infection. Suppresses cell death induced by effectors and PAMPs in plant hosts. Triggers a hypersensitive response (HR) in the presence of Rps1d. Suppresses BAX-induced cell death and enhan,ced P.capsici infection in Nicotiana benthamiana. Also suppresses effector-triggered immunity induction by associating with Avr1b and Rps1b, suggesting a role in suppressing plant immunity. The protein is RxLR effector protein Avh6 of Phytophthora sojae (strain P6497) (Soybean stem and root rot agent).